Reading from the N-terminus, the 198-residue chain is Altered inheritance of mitochondria protein 34, mitochondrial (198 aa).

The transit peptide at 1–55 (MSISLLGRIVSQQFSGIRAAGPGRSLYLPFTLLLKQPGAYKVNLHRYVHSTQTKS) directs the protein to the mitochondrion. The SAP domain maps to 69 to 103 (FQKFTVKVLKEQCKSRGLKLSGRKSDLLQRLITHD). The chain crosses the membrane as a helical span at residues 172–187 (IFLLGFFMLSCLWWNL).

The protein belongs to the AIM34 family.

The protein resides in the mitochondrion membrane. This chain is Altered inheritance of mitochondria protein 34, mitochondrial (AIM34), found in Saccharomyces cerevisiae (strain RM11-1a) (Baker's yeast).